The chain runs to 268 residues: 4-hydroxy-tetrahydrodipicolinate reductase (268 aa).

An NAD(+)-binding site is contributed by Gly-8 to Met-13. Arg-36 is a binding site for NADP(+). Residues Gly-99–Thr-101 and Ala-123–Phe-126 contribute to the NAD(+) site. Catalysis depends on His-156, which acts as the Proton donor/acceptor. His-157 contributes to the (S)-2,3,4,5-tetrahydrodipicolinate binding site. Catalysis depends on Lys-160, which acts as the Proton donor. (S)-2,3,4,5-tetrahydrodipicolinate is bound at residue Gly-166–Thr-167.

The protein belongs to the DapB family.

It localises to the cytoplasm. It carries out the reaction (S)-2,3,4,5-tetrahydrodipicolinate + NAD(+) + H2O = (2S,4S)-4-hydroxy-2,3,4,5-tetrahydrodipicolinate + NADH + H(+). The enzyme catalyses (S)-2,3,4,5-tetrahydrodipicolinate + NADP(+) + H2O = (2S,4S)-4-hydroxy-2,3,4,5-tetrahydrodipicolinate + NADPH + H(+). It functions in the pathway amino-acid biosynthesis; L-lysine biosynthesis via DAP pathway; (S)-tetrahydrodipicolinate from L-aspartate: step 4/4. In terms of biological role, catalyzes the conversion of 4-hydroxy-tetrahydrodipicolinate (HTPA) to tetrahydrodipicolinate. This chain is 4-hydroxy-tetrahydrodipicolinate reductase, found in Pseudomonas fluorescens (strain ATCC BAA-477 / NRRL B-23932 / Pf-5).